Consider the following 241-residue polypeptide: MTHITRLEAPWFLRASKKEYKWTVRASPGPHPLGKSIPLGLLLRDYLAFTSSLKESKKIISDGKVLVDGRVRRDYKYPVGLMDVIAIPHADLYLRIVPDRARLLKPVKISEEESKFKLVRLLNKTLVKGGLLQFNLEDGRNLLISKESTEMFKLPTLTTLKISIPNQEILGVYGFKENVYVMAVGGKNAGIIGQLKRIQTSPYKTRRYSIVVIRSPDGSEYETNLENAMVIGEEKPEVKVE.

The S4 RNA-binding domain occupies 37-99; that stretch reads IPLGLLLRDY…ADLYLRIVPD (63 aa).

The protein belongs to the eukaryotic ribosomal protein eS4 family.

The protein is Small ribosomal subunit protein eS4 of Metallosphaera sedula (strain ATCC 51363 / DSM 5348 / JCM 9185 / NBRC 15509 / TH2).